Here is a 430-residue protein sequence, read N- to C-terminus: RPM1 interacting protein 13 (430 aa).

A disordered region spans residues 1–21 (MGSGNHVDIVDVSSGEEDVDT). Positions 231–300 (RHRIRQPIPH…QVSQSSHHSS (70 aa)) are nuclear localization.

In terms of assembly, interacts with RPM1 (via its NB-ARC domain). Binds to ARF1 in the nucleus.

The protein resides in the nucleus. Functionally, resistance protein interactor which positively enhances RPM1-mediated resistance to necrotrophic bacterial pathogens Pseudomonas syringae pv. tomato DC3000 harboring type III effector protein AvrRpm1 or AvrB, but prevents the hypersensitive response (HR) controlled by RPM1. Together with ARF1, promotes leaf senescence and cell death, probably by facilitating the translocation of ARF1 into the nucleus, and activates ROS-related enzymes (e.g. POD, CAT and SOD). The protein is RPM1 interacting protein 13 of Arabidopsis thaliana (Mouse-ear cress).